We begin with the raw amino-acid sequence, 681 residues long: MALKLLTLIALTCAAANAAKSSYKLCVPAAYMKDCEQMLEVPTKSKVALECVPARDRVECLSFVQQRQADFVPVDPEDMYVASKIPNQDFVVFQEYRTDEEPDAPFRYEAVIVVHKDLPINNLDQLKGLRSCHTGVNRNVGYKIPLTMLMKRAVFPKMNDHSISPKENELKALSTFFAKSCIVGKWSPDPKTNSAWKSQYSHLCSMCEHPERCDYPDNYSGYEGALRCLAHNNGEVAFTKVIFTRKFFGLPVGTTPASPSNENPEEFRYLCVDGSKAPITGKACSWAARPWQGLIGHNDVLAKLAPLREKVKQLADSGAADKPEWFTKVLGLSEKIHHVADNIPIKPIDYLNKANYTEVIERGHGAPELVVRLCVTSNVALSKCRAMSVFAFSRDIRPILDCVQENSEDACLKSVQDNGSDLASVDDMRVAAAAKKYNLHPVFHEVYGELKTPNYAVAVVKKGTAYNKIDDLRGKKSCHSSYSTFSGLHAPLFYLINKRAIQSDHCVKNLGEFFSGGSCLPGVDKPENNPSGDDVSKLKKQCGSDSSAWKCLEEDRGDVAFVSSADLSHFDANQYELLCLNRDAGGRDVLSSFATCNVAMAPSRTWVAAKDFLSDVSIAHTPLSLAQMLATRPDLFNIYGEFLKNNNVIFNNAAKGLATTEKLDFEKFKTIHDVISSCGLA.

The N-terminal stretch at 1–18 is a signal peptide; the sequence is MALKLLTLIALTCAAANA. Transferrin-like domains lie at 23 to 364 and 371 to 676; these read YKLC…ERGH and VRLC…DVIS. 2 disulfide bridges follow: cysteine 26–cysteine 60 and cysteine 35–cysteine 51. The Fe(3+) site is built by aspartate 75 and tyrosine 108. 4 cysteine pairs are disulfide-bonded: cysteine 132-cysteine 228, cysteine 181-cysteine 207, cysteine 204-cysteine 213, and cysteine 271-cysteine 284. Residues threonine 134, arginine 138, valine 140, and glycine 141 each contribute to the hydrogencarbonate site. Asparagine 218 carries an N-linked (GlcNAc...) asparagine glycan. Tyrosine 222 contacts Fe(3+). Asparagine 355 carries an N-linked (GlcNAc...) asparagine glycan. Disulfide bonds link cysteine 374/cysteine 411 and cysteine 384/cysteine 402. N-linked (GlcNAc...) asparagine glycosylation is present at asparagine 418. 3 disulfides stabilise this stretch: cysteine 478-cysteine 551, cysteine 506-cysteine 678, and cysteine 579-cysteine 596.

Belongs to the transferrin family.

The protein resides in the secreted. In terms of biological role, transferrins are iron binding transport proteins which bind Fe(3+) ion in association with the binding of an anion, usually bicarbonate. This transferrin binds only one Fe(3+) ion per protein molecule. This is Transferrin from Manduca sexta (Tobacco hawkmoth).